The following is a 138-amino-acid chain: Probable lactoylglutathione lyase (138 aa).

A VOC domain is found at 5-129 (RILHTMLRVG…DGYMIELIQN (125 aa)). H8 lines the Ni(2+) pocket. Position 12 (R12) interacts with substrate. E59 contributes to the Ni(2+) binding site. Residues N63 and H77 each contribute to the substrate site. Ni(2+) is bound by residues H77 and E125. E125 serves as the catalytic Proton donor/acceptor.

The protein belongs to the glyoxalase I family. Ni(2+) is required as a cofactor.

The catalysed reaction is (R)-S-lactoylglutathione = methylglyoxal + glutathione. It functions in the pathway secondary metabolite metabolism; methylglyoxal degradation; (R)-lactate from methylglyoxal: step 1/2. Its function is as follows. Catalyzes the conversion of hemimercaptal, formed from methylglyoxal and glutathione, to S-lactoylglutathione. The polypeptide is Probable lactoylglutathione lyase (gloA) (Vibrio parahaemolyticus serotype O3:K6 (strain RIMD 2210633)).